Consider the following 35-residue polypeptide: Non-specific lipid-transfer protein 1 (35 aa).

C13 and C28 are joined by a disulfide.

In terms of tissue distribution, seeds.

Functionally, plant non-specific lipid-transfer proteins transfer phospholipids as well as galactolipids across membranes. May play a role in wax or cutin deposition in the cell walls of expanding epidermal cells and certain secretory tissues. Inhibits the growth of F.oxysporum and P.infestans. This Nigella sativa (Black cumin) protein is Non-specific lipid-transfer protein 1.